Reading from the N-terminus, the 149-residue chain is Arginine repressor (149 aa).

This sequence belongs to the ArgR family.

It is found in the cytoplasm. The protein operates within amino-acid biosynthesis; L-arginine biosynthesis [regulation]. Functionally, regulates arginine biosynthesis genes. This Listeria monocytogenes serotype 4b (strain F2365) protein is Arginine repressor.